We begin with the raw amino-acid sequence, 848 residues long: Glutenin, high molecular weight subunit DX5 (848 aa).

A signal peptide spans Met1–Ala21. The disordered stretch occupies residues Tyr124–Gly804. Composition is skewed to low complexity over residues Pro126–Gly137, Gln145–Pro166, Pro173–Gly203, Gln210–Gly240, Gln263–Gly303, Gln310–Gly351, Pro359–Gly411, Pro419–Gly468, Gln476–Ser527, Gln544–Pro659, Gly670–Gly687, Gln709–Gln727, and Gly739–Gly795.

Belongs to the gliadin/glutenin family. In terms of assembly, disulfide-bridge linked aggregates.

Its function is as follows. Glutenins are high-molecular weight seed storage proteins of wheat endosperm. Thought to be responsible for the visco-elastic property of wheat dough. This Triticum aestivum (Wheat) protein is Glutenin, high molecular weight subunit DX5 (GLU-1D-1D).